The primary structure comprises 652 residues: Oligopeptide-binding protein AliB (652 aa).

Residues 1-24 (MKKSKSKYLTLAGLVLGTGVLLSA) form the signal peptide. A lipid anchor (N-palmitoyl cysteine) is attached at cysteine 25. Cysteine 25 is lipidated: S-diacylglycerol cysteine.

The protein belongs to the bacterial solute-binding protein 5 family.

It is found in the cell membrane. Functionally, part of the binding-protein-dependent transport system for oligopeptides; probably an oligopeptide binding protein. In Streptococcus pneumoniae serotype 4 (strain ATCC BAA-334 / TIGR4), this protein is Oligopeptide-binding protein AliB (aliB).